Here is a 112-residue protein sequence, read N- to C-terminus: Putative pterin-4-alpha-carbinolamine dehydratase (112 aa).

Belongs to the pterin-4-alpha-carbinolamine dehydratase family.

The enzyme catalyses (4aS,6R)-4a-hydroxy-L-erythro-5,6,7,8-tetrahydrobiopterin = (6R)-L-erythro-6,7-dihydrobiopterin + H2O. The protein is Putative pterin-4-alpha-carbinolamine dehydratase of Shewanella amazonensis (strain ATCC BAA-1098 / SB2B).